The primary structure comprises 95 residues: Large ribosomal subunit protein bL25 (95 aa).

It belongs to the bacterial ribosomal protein bL25 family. Part of the 50S ribosomal subunit; part of the 5S rRNA/L5/L18/L25 subcomplex. Contacts the 5S rRNA. Binds to the 5S rRNA independently of L5 and L18.

Its function is as follows. This is one of the proteins that binds to the 5S RNA in the ribosome where it forms part of the central protuberance. This is Large ribosomal subunit protein bL25 from Shewanella amazonensis (strain ATCC BAA-1098 / SB2B).